Reading from the N-terminus, the 275-residue chain is MVITIKDIINIPYDKAEKTIIEFIKNKIEEANLKGAVIGLSGGVDSSVTLLLTMKAIGIERVTALIMPDTRVTPKRDIEDALWLVKKYGIKYYVIRIDDIVDSYSAMPFFNINYNIPTGNLRARIRMNILYYYANLHNYIVVGTGDRSEILIGYFTKYGDGGVDILPIGSLFKTQVRKMGDYLGLPEKITSKPSSPALWLGHKAEEELGIKYETIDLVLYALFDKHIEPEKVPEHTGVDPSIVAKILEMHRKTRHKRLSPPIPSLPWVKEPIREI.

39 to 46 is a binding site for ATP; it reads GLSGGVDS. Asp45 is a Mg(2+) binding site. A deamido-NAD(+)-binding site is contributed by Arg124. Residue Thr144 participates in ATP binding. Glu149 is a Mg(2+) binding site. Residues Lys157 and Asp164 each contribute to the deamido-NAD(+) site. ATP contacts are provided by Lys173 and Ser195. Residue 255 to 256 participates in deamido-NAD(+) binding; sequence HK.

Belongs to the NAD synthetase family. As to quaternary structure, homodimer.

The enzyme catalyses deamido-NAD(+) + NH4(+) + ATP = AMP + diphosphate + NAD(+) + H(+). Its pathway is cofactor biosynthesis; NAD(+) biosynthesis; NAD(+) from deamido-NAD(+) (ammonia route): step 1/1. In terms of biological role, catalyzes the ATP-dependent amidation of deamido-NAD to form NAD. Uses ammonia as a nitrogen source. This chain is NH(3)-dependent NAD(+) synthetase, found in Staphylothermus marinus (strain ATCC 43588 / DSM 3639 / JCM 9404 / F1).